The chain runs to 111 residues: Small ribosomal subunit protein bS18 (111 aa).

The tract at residues 1–32 (MDLENTENVENNNNNEEEVKAKGERKAHFNKE) is disordered. A compositionally biased stretch (basic and acidic residues) spans 17-32 (EEVKAKGERKAHFNKE).

Belongs to the bacterial ribosomal protein bS18 family. In terms of assembly, part of the 30S ribosomal subunit. Forms a tight heterodimer with protein bS6.

Functionally, binds as a heterodimer with protein bS6 to the central domain of the 16S rRNA, where it helps stabilize the platform of the 30S subunit. This chain is Small ribosomal subunit protein bS18, found in Brachyspira hyodysenteriae (strain ATCC 49526 / WA1).